The primary structure comprises 247 residues: Uridylate kinase (247 aa).

18 to 21 (KLSG) is a binding site for ATP. Residue G60 participates in UMP binding. Residues G61 and R65 each coordinate ATP. UMP-binding positions include D80 and 141–148 (TGNPFFTT). ATP is bound by residues T168, Y174, and D177.

Belongs to the UMP kinase family. Homohexamer.

It is found in the cytoplasm. It catalyses the reaction UMP + ATP = UDP + ADP. The protein operates within pyrimidine metabolism; CTP biosynthesis via de novo pathway; UDP from UMP (UMPK route): step 1/1. Inhibited by UTP. In terms of biological role, catalyzes the reversible phosphorylation of UMP to UDP. The protein is Uridylate kinase of Ectopseudomonas mendocina (strain ymp) (Pseudomonas mendocina).